The following is a 1035-amino-acid chain: Valine--tRNA ligase (1035 aa).

Residues 45 to 55 (PNVTGALHLGH) carry the 'HIGH' region motif. Residues 253-281 (EKLSDANEKEAVDLNKQIEALQKRREERL) are a coiled coil. Lysine 619 lines the ATP pocket. Residues 967-1035 (DVEAELARLE…QDILKLQSKK (69 aa)) adopt a coiled-coil conformation.

The protein belongs to the class-I aminoacyl-tRNA synthetase family. ValS type 1 subfamily. In terms of assembly, monomer.

The protein localises to the cytoplasm. The catalysed reaction is tRNA(Val) + L-valine + ATP = L-valyl-tRNA(Val) + AMP + diphosphate. In terms of biological role, catalyzes the attachment of valine to tRNA(Val). As ValRS can inadvertently accommodate and process structurally similar amino acids such as threonine, to avoid such errors, it has a 'posttransfer' editing activity that hydrolyzes mischarged Thr-tRNA(Val) in a tRNA-dependent manner. This chain is Valine--tRNA ligase, found in Rhodopirellula baltica (strain DSM 10527 / NCIMB 13988 / SH1).